The sequence spans 872 residues: Eukaryotic translation initiation factor 3 subunit C (872 aa).

The segment at 1-100 is disordered; that stretch reads MSRFFRGGDD…KVKSAKDKRF (100 aa). Composition is skewed to acidic residues over residues 16-59 and 72-87; these read SSEE…DEEE and SDDE…SDDE. A compositionally biased stretch (basic and acidic residues) spans 88 to 100; it reads ATTKVKSAKDKRF. The region spanning 613–787 is the PCI domain; it reads FHMHINLELL…ETVIFRKGVE (175 aa). Residues 812–872 are disordered; the sequence is TLEQKTQGSA…GGALGNAVRG (61 aa). The span at 831–848 shows a compositional bias: gly residues; it reads GGGQRGGGQRGGRGGART.

The protein belongs to the eIF-3 subunit C family. Component of the eukaryotic translation initiation factor 3 (eIF-3) complex.

The protein localises to the cytoplasm. Its function is as follows. Component of the eukaryotic translation initiation factor 3 (eIF-3) complex, which is involved in protein synthesis of a specialized repertoire of mRNAs and, together with other initiation factors, stimulates binding of mRNA and methionyl-tRNAi to the 40S ribosome. The eIF-3 complex specifically targets and initiates translation of a subset of mRNAs involved in cell proliferation. The sequence is that of Eukaryotic translation initiation factor 3 subunit C (nip-1) from Neurospora crassa (strain ATCC 24698 / 74-OR23-1A / CBS 708.71 / DSM 1257 / FGSC 987).